The following is a 178-amino-acid chain: Leukemia NUP98 fusion partner 1 (178 aa).

3 disordered regions span residues 28–55 (EDQR…PLPV), 89–108 (SEDG…HSKI), and 147–178 (IKSR…KGPE). A compositionally biased stretch (basic residues) spans 34–47 (RERHRLQATSHRKT). The span at 147-167 (IKSRKKVEEERSSRKEEHGEA) shows a compositional bias: basic and acidic residues.

This is Leukemia NUP98 fusion partner 1 (LNP1) from Homo sapiens (Human).